Reading from the N-terminus, the 132-residue chain is Small ribosomal subunit protein uS8 (132 aa).

It belongs to the universal ribosomal protein uS8 family. In terms of assembly, part of the 30S ribosomal subunit. Contacts proteins S5 and S12.

In terms of biological role, one of the primary rRNA binding proteins, it binds directly to 16S rRNA central domain where it helps coordinate assembly of the platform of the 30S subunit. The polypeptide is Small ribosomal subunit protein uS8 (Mycolicibacterium smegmatis (strain ATCC 700084 / mc(2)155) (Mycobacterium smegmatis)).